We begin with the raw amino-acid sequence, 154 residues long: SsrA-binding protein (154 aa).

It belongs to the SmpB family.

It localises to the cytoplasm. Functionally, required for rescue of stalled ribosomes mediated by trans-translation. Binds to transfer-messenger RNA (tmRNA), required for stable association of tmRNA with ribosomes. tmRNA and SmpB together mimic tRNA shape, replacing the anticodon stem-loop with SmpB. tmRNA is encoded by the ssrA gene; the 2 termini fold to resemble tRNA(Ala) and it encodes a 'tag peptide', a short internal open reading frame. During trans-translation Ala-aminoacylated tmRNA acts like a tRNA, entering the A-site of stalled ribosomes, displacing the stalled mRNA. The ribosome then switches to translate the ORF on the tmRNA; the nascent peptide is terminated with the 'tag peptide' encoded by the tmRNA and targeted for degradation. The ribosome is freed to recommence translation, which seems to be the essential function of trans-translation. In Enterococcus hirae (strain ATCC 9790 / DSM 20160 / JCM 8729 / LMG 6399 / NBRC 3181 / NCIMB 6459 / NCDO 1258 / NCTC 12367 / WDCM 00089 / R), this protein is SsrA-binding protein.